Reading from the N-terminus, the 362-residue chain is E3 ubiquitin-protein ligase rififylin (362 aa).

The tract at residues 17–37 (ETPPPQGARTQAYSNPGYSSF) is disordered. Positions 24-37 (ARTQAYSNPGYSSF) are enriched in polar residues. The FYVE-type zinc finger occupies 41–93 (TGSEPSCKACGVHFASTTRKQTCLDCKKNFCMTCSSQEGNGPRLCLLCLRFRA). The SAP 1 domain occupies 101–120 (LMKMKVKDLRDYLSLHDIST). The interval 162–183 (LTQPQSSTVPPTSPGLPSSPAQ) is disordered. A phosphoserine mark is found at Ser225, Ser228, Ser231, and Ser239. The SAP 2 domain maps to 249-263 (IEGLTVRQLKEILAR). The RING-type zinc-finger motif lies at 315–350 (CKICMDSPIDCVLLECGHMVTCTKCGKRMNECPICR).

In terms of assembly, interacts with CASP8 and CASP10. Interacts with RIPK1 (via protein kinase domain); involved in RIPK1 ubiquitination. Interacts with PRR5L. Interacts (via RING-type zinc finger) with p53/TP53; involved in p53/TP53 ubiquitination. Interacts (via RING-type zinc finger) with MDM2; the interaction stabilizes MDM2. In terms of processing, autoubiquitinated. Palmitoylated. Post-translationally, undergoes caspase-mediated cleavage upon death-receptor activation, by TNFSF10 for instance. May be mediated by the caspases CASP8 and CASP10 in a negative feedback loop. In terms of tissue distribution, ubiquitous. Detected in cerebrum, cerebellum, midbrain, brain stem, hippocampus, striatum, liver, heart, lung, kidney, muscle, spleen and testis.

It is found in the cytoplasm. The protein resides in the cytosol. It localises to the cell membrane. The protein localises to the recycling endosome membrane. The catalysed reaction is S-ubiquitinyl-[E2 ubiquitin-conjugating enzyme]-L-cysteine + [acceptor protein]-L-lysine = [E2 ubiquitin-conjugating enzyme]-L-cysteine + N(6)-ubiquitinyl-[acceptor protein]-L-lysine.. It participates in protein modification; protein ubiquitination. Its function is as follows. E3 ubiquitin-protein ligase that regulates several biological processes through the ubiquitin-mediated proteasomal degradation of various target proteins. Mediates 'Lys-48'-linked polyubiquitination of PRR5L and its subsequent proteasomal degradation thereby indirectly regulating cell migration through the mTORC2 complex. Also ubiquitinates the caspases CASP8 and CASP10, promoting their proteasomal degradation, to negatively regulate apoptosis downstream of death domain receptors. Also negatively regulates the tumor necrosis factor-mediated signaling pathway through targeting of RIPK1 to ubiquitin-mediated proteasomal degradation. Negatively regulates p53/TP53 through its direct ubiquitination and targeting to proteasomal degradation. Indirectly, may also negatively regulate p53/TP53 through ubiquitination and degradation of SFN. May also play a role in endocytic recycling. This is E3 ubiquitin-protein ligase rififylin from Rattus norvegicus (Rat).